The chain runs to 172 residues: Disulfide bond formation protein B (172 aa).

The Cytoplasmic portion of the chain corresponds to 1 to 11; sequence MNPFRWSFRAQ. A helical membrane pass occupies residues 12 to 28; the sequence is FLLGFLACAGLLAYAIY. Topologically, residues 29-46 are periplasmic; sequence VQLHLGLEPCPLCIFQRI. Cysteine 38 and cysteine 41 are oxidised to a cystine. Residues 47–63 form a helical membrane-spanning segment; that stretch reads AFAALAMFFLLGALHGP. At 64 to 70 the chain is on the cytoplasmic side; that stretch reads RAAAGRK. A helical transmembrane segment spans residues 71 to 88; that stretch reads VYGVLSFIAAGVGMGIAA. The Periplasmic portion of the chain corresponds to 89–145; the sequence is RHVWVQIRPKDMMSSCGPPLSFLSETMGPFEVFRTVLTGTGDCGNIDWRFLGLSMPM. Cysteines 104 and 131 form a disulfide. Residues 146 to 164 traverse the membrane as a helical segment; sequence WSMVWFVGLALWALYAGFK. Over 165–172 the chain is Cytoplasmic; that stretch reads ARRSSVHH.

It belongs to the DsbB family.

Its subcellular location is the cell inner membrane. Required for disulfide bond formation in some periplasmic proteins. Acts by oxidizing the DsbA protein. This Xanthomonas euvesicatoria pv. vesicatoria (strain 85-10) (Xanthomonas campestris pv. vesicatoria) protein is Disulfide bond formation protein B.